Consider the following 177-residue polypeptide: Translation initiation factor IF-3 (177 aa).

Belongs to the IF-3 family. In terms of assembly, monomer.

Its subcellular location is the cytoplasm. In terms of biological role, IF-3 binds to the 30S ribosomal subunit and shifts the equilibrium between 70S ribosomes and their 50S and 30S subunits in favor of the free subunits, thus enhancing the availability of 30S subunits on which protein synthesis initiation begins. The chain is Translation initiation factor IF-3 from Synechocystis sp. (strain ATCC 27184 / PCC 6803 / Kazusa).